Here is a 576-residue protein sequence, read N- to C-terminus: uncharacterized protein (576 aa).

The Cytoplasmic portion of the chain corresponds to Met-1–Ala-8. The chain crosses the membrane as a helical span at residues Ile-9–Val-29. The Extracellular portion of the chain corresponds to Ala-30 to Asn-45. A helical membrane pass occupies residues Met-46–Trp-66. Topologically, residues Arg-67–Glu-71 are cytoplasmic. Residues Ile-72–Phe-92 traverse the membrane as a helical segment. The Extracellular segment spans residues Thr-93–Phe-103. A helical membrane pass occupies residues Phe-104–Ile-124. The Cytoplasmic segment spans residues Gln-125 to Gly-141. A helical membrane pass occupies residues Val-142–Trp-162. The Extracellular portion of the chain corresponds to Arg-163–Ser-400. A helical membrane pass occupies residues Leu-401 to Thr-421. The Cytoplasmic portion of the chain corresponds to Thr-422–Asn-437. Residues Phe-438 to Leu-458 form a helical membrane-spanning segment. Topologically, residues Gly-459–Lys-476 are extracellular. A helical membrane pass occupies residues Ser-477–Val-497. At Asn-498 to Lys-512 the chain is on the cytoplasmic side. The helical transmembrane segment at Phe-513 to Phe-533 threads the bilayer. Over Tyr-534 to Asn-545 the chain is Extracellular. Residues Cys-546–Val-566 form a helical membrane-spanning segment. Residues Thr-567 to Val-576 lie on the Cytoplasmic side of the membrane.

It belongs to the auxin efflux carrier (TC 2.A.69) family.

The protein resides in the membrane. This is an uncharacterized protein from Saccharomyces cerevisiae (strain ATCC 204508 / S288c) (Baker's yeast).